The sequence spans 292 residues: RNA polymerase II transcriptional coactivator SUB1 (292 aa).

2 disordered regions span residues 1–31 and 117–292; these read MSYY…GGMP and LLSD…SEEE. Residues 20 to 31 are compositionally biased toward low complexity; that stretch reads LSNSNNNNGGMP. Ser119 bears the Phosphoserine mark. Composition is skewed to basic and acidic residues over residues 133 to 166, 179 to 191, 204 to 240, and 251 to 267; these read NNDK…LEPR, PHEE…EREA, KQQE…KIAE, and AKKE…KDAN. 3 positions are modified to phosphoserine: Ser268, Ser269, and Ser289.

Belongs to the transcriptional coactivator PC4 family.

It is found in the nucleus. In terms of biological role, plays a role in the release of TFIIB from the transcription complex during transcription initiation. Binds to TFIIB and specifically inhibits the formation of the TBP-TFIIB-promoter complexes. The protein is RNA polymerase II transcriptional coactivator SUB1 (SUB1) of Saccharomyces cerevisiae (strain ATCC 204508 / S288c) (Baker's yeast).